The chain runs to 491 residues: UDP-N-acetylmuramate--L-alanine ligase (491 aa).

126 to 132 contacts ATP; that stretch reads GTHGKTT.

It belongs to the MurCDEF family.

It localises to the cytoplasm. The enzyme catalyses UDP-N-acetyl-alpha-D-muramate + L-alanine + ATP = UDP-N-acetyl-alpha-D-muramoyl-L-alanine + ADP + phosphate + H(+). It participates in cell wall biogenesis; peptidoglycan biosynthesis. In terms of biological role, cell wall formation. In Escherichia coli O1:K1 / APEC, this protein is UDP-N-acetylmuramate--L-alanine ligase.